The chain runs to 523 residues: 2-isopropylmalate synthase (523 aa).

Residues 5–267 (VIIFDTTLRD…HTAINHQEIW (263 aa)) enclose the Pyruvate carboxyltransferase domain. Mn(2+)-binding residues include D14, H202, H204, and N238. A regulatory domain region spans residues 392 to 523 (RLDYFSVQSG…QHNENNKETV (132 aa)).

The protein belongs to the alpha-IPM synthase/homocitrate synthase family. LeuA type 1 subfamily. As to quaternary structure, homodimer. Requires Mn(2+) as cofactor.

It localises to the cytoplasm. The enzyme catalyses 3-methyl-2-oxobutanoate + acetyl-CoA + H2O = (2S)-2-isopropylmalate + CoA + H(+). Its pathway is amino-acid biosynthesis; L-leucine biosynthesis; L-leucine from 3-methyl-2-oxobutanoate: step 1/4. In terms of biological role, catalyzes the condensation of the acetyl group of acetyl-CoA with 3-methyl-2-oxobutanoate (2-ketoisovalerate) to form 3-carboxy-3-hydroxy-4-methylpentanoate (2-isopropylmalate). The polypeptide is 2-isopropylmalate synthase (Escherichia coli O157:H7).